The following is a 355-amino-acid chain: UDP-N-acetylglucosamine--N-acetylmuramyl-(pentapeptide) pyrophosphoryl-undecaprenol N-acetylglucosamine transferase (355 aa).

Residues 13 to 15 (TGG), Asn-125, Arg-162, Ser-190, Ile-244, and Gln-289 each bind UDP-N-acetyl-alpha-D-glucosamine.

Belongs to the glycosyltransferase 28 family. MurG subfamily.

It localises to the cell inner membrane. It catalyses the reaction di-trans,octa-cis-undecaprenyl diphospho-N-acetyl-alpha-D-muramoyl-L-alanyl-D-glutamyl-meso-2,6-diaminopimeloyl-D-alanyl-D-alanine + UDP-N-acetyl-alpha-D-glucosamine = di-trans,octa-cis-undecaprenyl diphospho-[N-acetyl-alpha-D-glucosaminyl-(1-&gt;4)]-N-acetyl-alpha-D-muramoyl-L-alanyl-D-glutamyl-meso-2,6-diaminopimeloyl-D-alanyl-D-alanine + UDP + H(+). It participates in cell wall biogenesis; peptidoglycan biosynthesis. In terms of biological role, cell wall formation. Catalyzes the transfer of a GlcNAc subunit on undecaprenyl-pyrophosphoryl-MurNAc-pentapeptide (lipid intermediate I) to form undecaprenyl-pyrophosphoryl-MurNAc-(pentapeptide)GlcNAc (lipid intermediate II). The polypeptide is UDP-N-acetylglucosamine--N-acetylmuramyl-(pentapeptide) pyrophosphoryl-undecaprenol N-acetylglucosamine transferase (Neisseria gonorrhoeae (strain ATCC 700825 / FA 1090)).